The sequence spans 456 residues: Kynurenine 3-monooxygenase (456 aa).

It belongs to the aromatic-ring hydroxylase family. KMO subfamily. FAD serves as cofactor.

The catalysed reaction is L-kynurenine + NADPH + O2 + H(+) = 3-hydroxy-L-kynurenine + NADP(+) + H2O. It functions in the pathway cofactor biosynthesis; NAD(+) biosynthesis; quinolinate from L-kynurenine: step 1/3. Catalyzes the hydroxylation of L-kynurenine (L-Kyn) to form 3-hydroxy-L-kynurenine (L-3OHKyn). Required for synthesis of quinolinic acid. The chain is Kynurenine 3-monooxygenase from Xanthomonas campestris pv. campestris (strain 8004).